A 342-amino-acid polypeptide reads, in one-letter code: RNA 3'-terminal phosphate cyclase (342 aa).

ATP-binding positions include glutamine 102 and 283 to 287; that span reads HLADQ. Histidine 308 acts as the Tele-AMP-histidine intermediate in catalysis.

It belongs to the RNA 3'-terminal cyclase family. Type 1 subfamily.

The protein localises to the cytoplasm. It catalyses the reaction a 3'-end 3'-phospho-ribonucleotide-RNA + ATP = a 3'-end 2',3'-cyclophospho-ribonucleotide-RNA + AMP + diphosphate. In terms of biological role, catalyzes the conversion of 3'-phosphate to a 2',3'-cyclic phosphodiester at the end of RNA. The mechanism of action of the enzyme occurs in 3 steps: (A) adenylation of the enzyme by ATP; (B) transfer of adenylate to an RNA-N3'P to produce RNA-N3'PP5'A; (C) and attack of the adjacent 2'-hydroxyl on the 3'-phosphorus in the diester linkage to produce the cyclic end product. The biological role of this enzyme is unknown but it is likely to function in some aspects of cellular RNA processing. The chain is RNA 3'-terminal phosphate cyclase from Pseudomonas fluorescens (strain ATCC BAA-477 / NRRL B-23932 / Pf-5).